A 2156-amino-acid polypeptide reads, in one-letter code: MAM and LDL-receptor class A domain-containing protein 1 (2156 aa).

An N-terminal signal peptide occupies residues 1-31 (MLFFLDRMLAFPMNETFCCLWIACVFNSTLA). The Vesicular portion of the chain corresponds to 32-2076 (QQGTESFQCD…FTYAQNNTWT (2045 aa)). In terms of domain architecture, LDL-receptor class A 1 spans 33-68 (QGTESFQCDNGVSLPPDSICDFTDQCGDSSDERHCL). 2 disulfide bridges follow: cysteine 40/cysteine 58 and cysteine 52/cysteine 67. MAM domains follow at residues 71 to 229 (ERCD…GCLP) and 268 to 427 (QACG…ACGQ). Positions 433 to 471 (LCSADEFPCTSGQCIAKESVCDSRQDCSDESDEDPATCS) constitute an LDL-receptor class A 2 domain. Cystine bridges form between cysteine 434-cysteine 446, cysteine 441-cysteine 459, and cysteine 453-cysteine 470. 2 consecutive MAM domains span residues 474 to 637 (LTCD…ECEI) and 652 to 816 (SKCD…NCTL). Asparagine 813 carries N-linked (GlcNAc...) asparagine glycosylation. Residues 822 to 860 (SCEGLDHFWCRHTRACIEKLRLCDLVDDCGDRTDEVNCA) enclose the LDL-receptor class A 3 domain. 3 cysteine pairs are disulfide-bonded: cysteine 823–cysteine 837, cysteine 831–cysteine 850, and cysteine 844–cysteine 859. An MAM 5 domain is found at 863-1024 (LQCNFETGIC…DDLSFMDCTL (162 aa)). An N-linked (GlcNAc...) asparagine glycan is attached at asparagine 1049. The LDL-receptor class A 4 domain occupies 1049–1086 (NCTDNEFICRSDGHCIEKMQKCDFKYDCPDKSDEASCV). Intrachain disulfides connect cysteine 1050–cysteine 1063, cysteine 1057–cysteine 1076, and cysteine 1070–cysteine 1085. The 169-residue stretch at 1088 to 1256 (EVCSFEKRSL…DDISFQDCSP (169 aa)) folds into the MAM 6 domain. Residue asparagine 1199 is glycosylated (N-linked (GlcNAc...) asparagine). One can recognise an LDL-receptor class A 5 domain in the interval 1263 to 1301 (KCTDHEFMCANKHCIAKDKLCDFVNDCADNSDETTFICR). Disulfide bonds link cysteine 1264–cysteine 1276, cysteine 1271–cysteine 1289, and cysteine 1283–cysteine 1300. The MAM 7 domain occupies 1305–1465 (GRCDFEFDLC…DIVLTENCLS (161 aa)). Residue asparagine 1414 is glycosylated (N-linked (GlcNAc...) asparagine). The LDL-receptor class A 6 domain occupies 1482-1518 (FCPLGYRECHNGKCYRLEQSCNFVDNCGDNTDENECG). 3 disulfide bridges follow: cysteine 1483/cysteine 1495, cysteine 1490/cysteine 1508, and cysteine 1502/cysteine 1517. Residues 1519 to 1676 (SSCTFEKGWC…DDIEFKNCTT (158 aa)) form the MAM 8 domain. The 38-residue stretch at 1683-1720 (LCPEITDFLCRDKKCIASHLLCDYKPDCSDRSDEAHCA) folds into the LDL-receptor class A 7 domain. Cystine bridges form between cysteine 1684–cysteine 1697, cysteine 1692–cysteine 1710, and cysteine 1704–cysteine 1719. One can recognise an MAM 9 domain in the interval 1727 to 1892 (GSCNFETSSG…DISFTPECVT (166 aa)). LDL-receptor class A domains are found at residues 1902-1939 (PCEADQFSCIYTLQCVPLSGKCDGHEDCIDGSDEMDCP), 1946-1982 (LCSNMEFPCSTDECIPSLLLCDGVPDCHFNEDELICS), and 1985-2023 (SCSNGALVCASSNSCIPAHQRCDGFADCMDFQLDESSCS). 12 cysteine pairs are disulfide-bonded: cysteine 1903/cysteine 1916, cysteine 1910/cysteine 1929, cysteine 1923/cysteine 1938, cysteine 1947/cysteine 1959, cysteine 1954/cysteine 1972, cysteine 1966/cysteine 1981, cysteine 1986/cysteine 1999, cysteine 1993/cysteine 2012, cysteine 2006/cysteine 2022, cysteine 2025/cysteine 2036, cysteine 2030/cysteine 2045, and cysteine 2047/cysteine 2056. In terms of domain architecture, EGF-like spans 2024-2057 (ECPLNYCRNGGTCVVEKNGPMCRCRQGWKGNRCH). Residues 2077–2097 (LLGIGLAFLMTHITVAVLCFL) form a helical membrane-spanning segment. The Cytoplasmic portion of the chain corresponds to 2098–2156 (ANRKVPIRKTEGSGNCAFVNPVYGNWSNPEKTESSVYSFSNPLYGTTSGSLETLSHHLK).

As to quaternary structure, interacts with FGF19. Strongly expressed in the small intestine.

The protein localises to the cytoplasmic vesicle membrane. Enhances production and/or transport of FGF19 and thus has a role in regulation of bile acid synthesis. The sequence is that of MAM and LDL-receptor class A domain-containing protein 1 from Homo sapiens (Human).